The primary structure comprises 240 residues: Ubiquinone biosynthesis O-methyltransferase (240 aa).

Positions 36, 66, 87, and 129 each coordinate S-adenosyl-L-methionine.

It belongs to the methyltransferase superfamily. UbiG/COQ3 family.

The catalysed reaction is a 3-demethylubiquinol + S-adenosyl-L-methionine = a ubiquinol + S-adenosyl-L-homocysteine + H(+). It catalyses the reaction a 3-(all-trans-polyprenyl)benzene-1,2-diol + S-adenosyl-L-methionine = a 2-methoxy-6-(all-trans-polyprenyl)phenol + S-adenosyl-L-homocysteine + H(+). It participates in cofactor biosynthesis; ubiquinone biosynthesis. Functionally, O-methyltransferase that catalyzes the 2 O-methylation steps in the ubiquinone biosynthetic pathway. The chain is Ubiquinone biosynthesis O-methyltransferase from Pelagibacter ubique (strain HTCC1062).